The following is a 117-amino-acid chain: MARVKRGVIARARHKKVLKAAKGYYGARSRVYRVAFQAVIKAGQYAYRDRRQRKRQFRQLWIARINAAARQNGLSYSKFINGLKKASVEIDRKILADIAVFDKVAFTALVEKAKSAL.

The protein belongs to the bacterial ribosomal protein bL20 family.

In terms of biological role, binds directly to 23S ribosomal RNA and is necessary for the in vitro assembly process of the 50S ribosomal subunit. It is not involved in the protein synthesizing functions of that subunit. The protein is Large ribosomal subunit protein bL20 of Pasteurella multocida (strain Pm70).